The chain runs to 530 residues: UDP-glucuronosyltransferase 2B17 (530 aa).

The first 23 residues, 1-23 (MPGKWISALLLLQISCCFQSGNC), serve as a signal peptide directing secretion. Residues 494 to 510 (VIGFLLTCSAVIAVLTV) traverse the membrane as a helical segment.

Belongs to the UDP-glycosyltransferase family.

Its subcellular location is the endoplasmic reticulum membrane. The enzyme catalyses glucuronate acceptor + UDP-alpha-D-glucuronate = acceptor beta-D-glucuronoside + UDP + H(+). It catalyses the reaction 17alpha-estradiol + UDP-alpha-D-glucuronate = 17alpha-estradiol 3-O-(beta-D-glucuronate) + UDP + H(+). It carries out the reaction 17alpha-estradiol + UDP-alpha-D-glucuronate = 17alpha-estradiol 17-O-(beta-D-glucuronate) + UDP + H(+). The catalysed reaction is 17beta-estradiol + UDP-alpha-D-glucuronate = 17beta-estradiol 17-O-(beta-D-glucuronate) + UDP + H(+). The enzyme catalyses 17beta-hydroxy-5alpha-androstan-3-one + UDP-alpha-D-glucuronate = 5alpha-dihydrotestosterone 17-O-(beta-D-glucuronate) + UDP + H(+). It catalyses the reaction testosterone + UDP-alpha-D-glucuronate = testosterone 17-O-(beta-D-glucuronate) + UDP + H(+). Functionally, UDP-glucuronosyltransferase (UGT) that catalyzes phase II biotransformation reactions in which lipophilic substrates are conjugated with glucuronic acid to increase the metabolite's water solubility, thereby facilitating excretion into either the urine or bile. Catalyzes the glucuronidation of endogenous steroid hormones such as androgens (epitestosterone, androsterone) and estrogens (estradiol, epiestradiol). In Rattus norvegicus (Rat), this protein is UDP-glucuronosyltransferase 2B17.